The primary structure comprises 311 residues: Aspartate carbamoyltransferase catalytic subunit (311 aa).

Carbamoyl phosphate is bound by residues Arg-58 and Thr-59. Residue Lys-86 coordinates L-aspartate. Carbamoyl phosphate-binding residues include Arg-108, His-136, and Gln-139. Residues Arg-169 and Arg-224 each coordinate L-aspartate. Carbamoyl phosphate-binding residues include Gly-265 and Pro-266.

This sequence belongs to the aspartate/ornithine carbamoyltransferase superfamily. ATCase family. Heterododecamer (2C3:3R2) of six catalytic PyrB chains organized as two trimers (C3), and six regulatory PyrI chains organized as three dimers (R2).

It catalyses the reaction carbamoyl phosphate + L-aspartate = N-carbamoyl-L-aspartate + phosphate + H(+). It functions in the pathway pyrimidine metabolism; UMP biosynthesis via de novo pathway; (S)-dihydroorotate from bicarbonate: step 2/3. Functionally, catalyzes the condensation of carbamoyl phosphate and aspartate to form carbamoyl aspartate and inorganic phosphate, the committed step in the de novo pyrimidine nucleotide biosynthesis pathway. This Geotalea daltonii (strain DSM 22248 / JCM 15807 / FRC-32) (Geobacter daltonii) protein is Aspartate carbamoyltransferase catalytic subunit.